We begin with the raw amino-acid sequence, 578 residues long: NADPH oxidase 4 (578 aa).

Topologically, residues 1 to 16 (MAVSWRSWLANEGVKH) are cytoplasmic. A helical transmembrane segment spans residues 17-37 (LCLLIWLSLNVLLFWKTFLLY). Residues 38 to 62 (NQGPEYYYIHQMLGLGLCLSRASAS) are Extracellular-facing. The Ferric oxidoreductase domain occupies 58 to 303 (RASASVLNLN…YCAERLYRCI (246 aa)). The helical transmembrane segment at 63-83 (VLNLNCSLILLPMCRTVLAYL) threads the bilayer. The Cytoplasmic segment spans residues 84–104 (RGSQKVPSRRTRRLLDKSKTL). Residues 105-125 (HITCGVTICIFSGVHVAAHLV) traverse the membrane as a helical segment. Over 126 to 154 (NALNFSVNYSEDFLELNAARYQNEDPRKL) the chain is Extracellular. Asparagine 133 carries N-linked (GlcNAc...) asparagine glycosylation. The chain crosses the membrane as a helical span at residues 155-175 (LFTTIPGLTGVCMVVVLFLMV). Topologically, residues 176–188 (TASTYAIRVSNYD) are cytoplasmic. Residues 189 to 209 (IFWYTHNLFFVFYMLLLLHVS) traverse the membrane as a helical segment. Residues 210 to 424 (GGLLKYQTNV…SPFEESLNYE (215 aa)) lie on the Extracellular side of the membrane. Positions 218–273 (NVDTHPPGCISLNQTSSQNMSIPDYVSEHFHGSLPRGFSKLEDRYQKTLVKICLEE) are E-loop; essential for H2O2 generating catalytic activity. N-linked (GlcNAc...) asparagine glycosylation is present at asparagine 230. The mediates interaction with TLR4 stretch occupies residues 248 to 575 (HGSLPRGFSK…YGTKFEYNKE (328 aa)). Residues 304–419 (RSNKPVTIIS…DGPFGSPFEE (116 aa)) form the FAD-binding FR-type domain. The helical transmembrane segment at 425–445 (VSLCVAGGIGVTPFASILNTL) threads the bilayer. The Cytoplasmic segment spans residues 446-578 (LDDWKPYKLR…KFEYNKESFS (133 aa)).

In terms of assembly, interacts with, relocalizes and stabilizes CYBA/p22phox. Interacts with TLR4. Interacts with protein disulfide isomerase. Interacts with PPP1R15A. Interacts with LRRC8A; this interaction prevents the ubiquitin-mediated degradation of LRRC8A. It depends on heme as a cofactor. N-glycosylation is required for the function. In terms of tissue distribution, EXpressed in brain, in all layers of the cerebellum, in pyramidal cells of the Ammon horn and in Purkinje cells (at protein level). Expressed in osteoclasts, leukocytes, kidney, liver and lung.

It is found in the cytoplasm. The protein resides in the endoplasmic reticulum membrane. Its subcellular location is the cell membrane. It localises to the cell junction. The protein localises to the focal adhesion. It is found in the nucleus. It carries out the reaction NADPH + 2 O2 = 2 superoxide + NADP(+) + H(+). The enzyme catalyses NADPH + O2 + H(+) = H2O2 + NADP(+). Activated by insulin. Inhibited by diphenylene iodonium. Inhibited by plumbagin. Activated by phorbol 12-myristate 13-acetate (PMA). NADPH oxidase that catalyzes predominantly the reduction of oxygen to H2O2. Can also catalyze to a smaller extent, the reduction of oxygen to superoxide. May function as an oxygen sensor regulating the KCNK3/TASK-1 potassium channel and HIF1A activity. May regulate insulin signaling cascade. May play a role in apoptosis, bone resorption and lipolysaccharide-mediated activation of NFKB. May produce superoxide in the nucleus and play a role in regulating gene expression upon cell stimulation. Promotes ferroptosis, reactive oxygen species production and reduced glutathione (GSH) levels by activating NLRP3 inflammasome activation and cytokine release. The polypeptide is NADPH oxidase 4 (Nox4) (Mus musculus (Mouse)).